Reading from the N-terminus, the 216-residue chain is Somatotropin (216 aa).

A signal peptide spans 1–26 (MAAGPRTSVLLAFALLCLPWTQEVGA). H45 is a Zn(2+) binding site. The cysteines at positions 78 and 189 are disulfide-linked. Residue S131 is modified to Phosphoserine. E198 contributes to the Zn(2+) binding site. A disulfide bridge links C206 with C214.

It belongs to the somatotropin/prolactin family.

The protein resides in the secreted. Functionally, plays an important role in growth control. Its major role in stimulating body growth is to stimulate the liver and other tissues to secrete IGF1. It stimulates both the differentiation and proliferation of myoblasts. It also stimulates amino acid uptake and protein synthesis in muscle and other tissues. The chain is Somatotropin (GH1) from Hippopotamus amphibius (Hippopotamus).